A 457-amino-acid polypeptide reads, in one-letter code: Nuclear distribution protein PAC1 (457 aa).

Residues 73-106 (SSIVRLQRRIIELEKEIQELTDENENLRENGPSS) are a coiled coil. 7 WD repeats span residues 126–165 (SAGASVTSVKLHPELPLVFIATDAGKLQCYDLMNYTMPVA), 169–211 (AHMR…LQLI), 216–257 (GHEH…CLKS), 260–299 (PHTEWVRCLDVMGDFVVTGSNDCTVRLSHWPTGRSLSFGT), 322–362 (SHRF…FVAH), 382–419 (GHSSWVRDVRVRGKHAFSCSDDRSIKVWDLSTCEVVRS), and 423–457 (LHSGFINCIDIDCGGLNRQLLVSGGADGKLVILMK).

It belongs to the WD repeat LIS1/nudF family. As to quaternary structure, self-associates. Interacts with NDL1 and dynein.

It is found in the cytoplasm. The protein localises to the cytoskeleton. The protein resides in the spindle pole. Functionally, positively regulates the activity of the minus-end directed microtubule motor protein dynein. Plays a central role in positioning the mitotic spindle at the bud neck during cell division. Targets cytoplasmic dynein to microtubule plus ends, thereby promoting dynein-mediated microtubule sliding along the bud cortex and consequently the movement of the mitotic spindle to the bud neck. The sequence is that of Nuclear distribution protein PAC1 from Lachancea thermotolerans (strain ATCC 56472 / CBS 6340 / NRRL Y-8284) (Yeast).